Reading from the N-terminus, the 559-residue chain is Putative helicase 22 (559 aa).

The region spanning valine 186–serine 347 is the Helicase ATP-binding domain. Residue alanine 199–serine 206 coordinates ATP. The short motif at aspartate 300–histidine 303 is the DEAH box element. Residues threonine 410 to asparagine 552 enclose the Helicase C-terminal domain.

The chain is Putative helicase 22 (SIFV0022) from Sulfolobus islandicus filamentous virus (isolate Iceland/Hveragerdi) (SIFV).